The chain runs to 88 residues: Small ribosomal subunit protein bS20 (88 aa).

The protein belongs to the bacterial ribosomal protein bS20 family.

In terms of biological role, binds directly to 16S ribosomal RNA. The polypeptide is Small ribosomal subunit protein bS20 (Blochmanniella floridana).